Reading from the N-terminus, the 283-residue chain is tRNA pseudouridine synthase A (283 aa).

D52 acts as the Nucleophile in catalysis. Y148 contacts substrate.

This sequence belongs to the tRNA pseudouridine synthase TruA family. In terms of assembly, homodimer.

The enzyme catalyses uridine(38/39/40) in tRNA = pseudouridine(38/39/40) in tRNA. Its function is as follows. Formation of pseudouridine at positions 38, 39 and 40 in the anticodon stem and loop of transfer RNAs. The chain is tRNA pseudouridine synthase A from Orientia tsutsugamushi (strain Ikeda) (Rickettsia tsutsugamushi).